We begin with the raw amino-acid sequence, 252 residues long: Small ribosomal subunit protein uS2 (252 aa).

This sequence belongs to the universal ribosomal protein uS2 family.

In Chlorobium phaeobacteroides (strain DSM 266 / SMG 266 / 2430), this protein is Small ribosomal subunit protein uS2.